Here is a 153-residue protein sequence, read N- to C-terminus: MLAFNFFGATEGGLFDINATLPLMAIQVVALTYILNSLFFKPVGNVVEKREKFVSNNVIEAKNKLSEVKKLEADLLTQLQSARTEAQRIVSEAEDESDKLYKEALELANNEANASKEKARLEIESQTSAARDQLSKQADVLSELIVNRLILEK.

Residues 23-40 form a helical membrane-spanning segment; that stretch reads LMAIQVVALTYILNSLFF.

The protein belongs to the ATPase B chain family. In terms of assembly, F-type ATPases have 2 components, F(1) - the catalytic core - and F(0) - the membrane proton channel. F(1) has five subunits: alpha(3), beta(3), gamma(1), delta(1), epsilon(1). F(0) has four main subunits: a(1), b(1), b'(1) and c(10-14). The alpha and beta chains form an alternating ring which encloses part of the gamma chain. F(1) is attached to F(0) by a central stalk formed by the gamma and epsilon chains, while a peripheral stalk is formed by the delta, b and b' chains.

Its subcellular location is the cellular thylakoid membrane. Its function is as follows. F(1)F(0) ATP synthase produces ATP from ADP in the presence of a proton or sodium gradient. F-type ATPases consist of two structural domains, F(1) containing the extramembraneous catalytic core and F(0) containing the membrane proton channel, linked together by a central stalk and a peripheral stalk. During catalysis, ATP synthesis in the catalytic domain of F(1) is coupled via a rotary mechanism of the central stalk subunits to proton translocation. Functionally, component of the F(0) channel, it forms part of the peripheral stalk, linking F(1) to F(0). The b'-subunit is a diverged and duplicated form of b found in plants and photosynthetic bacteria. The polypeptide is ATP synthase subunit b' (Prochlorococcus marinus (strain MIT 9301)).